A 358-amino-acid chain; its full sequence is Snurportin-1 (358 aa).

Met-1 is subject to N-acetylmethionine. Disordered regions lie at residues Met-1–Glu-39 and Asp-69–Leu-89. The tract at residues Met-1–Leu-65 is necessary for interaction with KPNB1 and m3G-cap U1 and U5 snRNP import receptor activity. The interval Met-1 to Gly-160 is necessary for interaction with XPO1. Composition is skewed to polar residues over residues Ala-7–Ala-22 and Gln-30–Glu-39. One can recognise an IBB domain in the interval Ser-11–Met-73. Ser-75 carries the post-translational modification Phosphoserine. Residues Gly-128–Arg-130 form an interaction with m3G-cap structure region. Positions Met-210–Ala-329 are necessary for binding to the m3G-cap structure. A compositionally biased stretch (basic and acidic residues) spans Lys-315 to Ser-341. A disordered region spans residues Lys-315–Ser-358. Over residues Pro-349 to Ser-358 the composition is skewed to polar residues. Ser-351 bears the Phosphoserine mark.

Belongs to the snurportin family. Component of an import snRNP complex composed of KPNB1, SNUPN, SMN1 and ZNF259. Component of a nuclear export receptor complex composed of KPNB1, Ran, SNUPN and XPO1. Found in a trimeric export complex with SNUPN, Ran and XPO1. Interacts (via IBB domain) with KPNB1; the interaction is direct. Interacts with DDX20, IPO7, SMN1, SNRPB and XPO1. Interacts directly with XPO1. Its interaction with XPO1 and binding to m3G-cap U snRNPs appears to be mutually exclusive. Can form homomers.

It is found in the nucleus. The protein resides in the cytoplasm. Functions as an U snRNP-specific nuclear import adapter. Involved in the trimethylguanosine (m3G)-cap-dependent nuclear import of U snRNPs. Binds specifically to the terminal m3G-cap U snRNAs. The protein is Snurportin-1 (Snupn) of Rattus norvegicus (Rat).